Here is an 872-residue protein sequence, read N- to C-terminus: DNA mismatch repair protein MutS (872 aa).

Glycine 623–serine 630 contacts ATP.

Belongs to the DNA mismatch repair MutS family.

This protein is involved in the repair of mismatches in DNA. It is possible that it carries out the mismatch recognition step. This protein has a weak ATPase activity. This Trichlorobacter lovleyi (strain ATCC BAA-1151 / DSM 17278 / SZ) (Geobacter lovleyi) protein is DNA mismatch repair protein MutS.